The chain runs to 358 residues: Peptide chain release factor 1 (358 aa).

Position 237 is an N5-methylglutamine (glutamine 237). Residues 291-309 (EESGYRKLAGHGDRSEKIR) show a composition bias toward basic and acidic residues. The segment at 291-313 (EESGYRKLAGHGDRSEKIRTYNY) is disordered.

This sequence belongs to the prokaryotic/mitochondrial release factor family. Methylated by PrmC. Methylation increases the termination efficiency of RF1.

It is found in the cytoplasm. In terms of biological role, peptide chain release factor 1 directs the termination of translation in response to the peptide chain termination codons UAG and UAA. The sequence is that of Peptide chain release factor 1 from Mycoplasmopsis agalactiae (strain NCTC 10123 / CIP 59.7 / PG2) (Mycoplasma agalactiae).